The primary structure comprises 541 residues: Membrane protein insertase YidC (541 aa).

The next 5 helical transmembrane spans lie at 7-27, 346-368, 416-436, 454-474, and 495-515; these read LLVI…QLDY, IVQN…LYPL, LGGC…YWTF, LSAQ…MFLL, and PLIF…YWLV.

This sequence belongs to the OXA1/ALB3/YidC family. Type 1 subfamily. As to quaternary structure, interacts with the Sec translocase complex via SecD. Specifically interacts with transmembrane segments of nascent integral membrane proteins during membrane integration.

It is found in the cell inner membrane. Functionally, required for the insertion and/or proper folding and/or complex formation of integral membrane proteins into the membrane. Involved in integration of membrane proteins that insert both dependently and independently of the Sec translocase complex, as well as at least some lipoproteins. Aids folding of multispanning membrane proteins. The sequence is that of Membrane protein insertase YidC from Pasteurella multocida (strain Pm70).